A 116-amino-acid polypeptide reads, in one-letter code: MATKKEETFYELYRRTSLGICLTDALDDLITNDRINPQLAMKILANFDRVVAETLQEKVKARLQFKGALDNYRFCDDVWTFVIKNINFKLDGGNQTIQADKVKIVSCNAKRPGTDA.

It belongs to the TFIIA subunit 2 family. TFIIA is a heterodimer composed of the large TOA1 and the small TOA2 subunits.

Its subcellular location is the nucleus. TFIIA is a component of the transcription machinery of RNA polymerase II and plays an important role in transcriptional activation. TFIIA in a complex with tbp mediates transcriptional activity. The chain is Transcription initiation factor IIA subunit 2 (TOA2) from Pyricularia oryzae (strain 70-15 / ATCC MYA-4617 / FGSC 8958) (Rice blast fungus).